A 212-amino-acid polypeptide reads, in one-letter code: MNSVSTSAFGPVAFSLGLLLVLPAAFPAPVLPGEDSKDVAAPHSQPLTSSERIDKHIRYILDGISALRKETCNRSNMCESSKEALAENNLNLPKMAEKDGCFQSGFNEDTCLVKIITGLLEFEVYLEYLQNRFESSEEQARAVQMSTKALIQFLQKKAKNLDAITTPEPTTNASLLTKLQAQNQWLQDMTTHLILRSFKEFLQSSLRALRQM.

Positions 1-27 (MNSVSTSAFGPVAFSLGLLLVLPAAFP) are cleaved as a signal peptide. C72 and C78 are disulfide-bonded. N73 carries N-linked (GlcNAc...) asparagine glycosylation. Phosphoserine is present on S81. A disulfide bridge connects residues C101 and C111. An N-linked (GlcNAc...) asparagine glycan is attached at N172.

Belongs to the IL-6 superfamily. As to quaternary structure, component of a hexamer of two molecules each of IL6, IL6R and IL6ST; first binds to IL6R to associate with the signaling subunit IL6ST. Interacts with IL6R (via the N-terminal ectodomain); this interaction may be affected by IL6R-binding with SORL1, hence decreasing IL6 cis signaling. Interacts with SORL1 (via the N-terminal ectodomain); this interaction leads to IL6 internalization and lysosomal degradation. May form a trimeric complex with the soluble SORL1 ectodomain and soluble IL6R receptor; this interaction might stabilize circulating IL6, hence promoting IL6 trans signaling.

It localises to the secreted. Functionally, cytokine with a wide variety of biological functions in immunity, tissue regeneration, and metabolism. Binds to IL6R, then the complex associates to the signaling subunit IL6ST/gp130 to trigger the intracellular IL6-signaling pathway. The interaction with the membrane-bound IL6R and IL6ST stimulates 'classic signaling', whereas the binding of IL6 and soluble IL6R to IL6ST stimulates 'trans-signaling'. Alternatively, 'cluster signaling' occurs when membrane-bound IL6:IL6R complexes on transmitter cells activate IL6ST receptors on neighboring receiver cells. IL6 is a potent inducer of the acute phase response. Rapid production of IL6 contributes to host defense during infection and tissue injury, but excessive IL6 synthesis is involved in disease pathology. In the innate immune response, is synthesized by myeloid cells, such as macrophages and dendritic cells, upon recognition of pathogens through toll-like receptors (TLRs) at the site of infection or tissue injury. In the adaptive immune response, is required for the differentiation of B cells into immunoglobulin-secreting cells. Plays a major role in the differentiation of CD4(+) T cell subsets. Essential factor for the development of T follicular helper (Tfh) cells that are required for the induction of germinal-center formation. Required to drive naive CD4(+) T cells to the Th17 lineage. Also required for proliferation of myeloma cells and the survival of plasmablast cells. In terms of biological role, acts as an essential factor in bone homeostasis and on vessels directly or indirectly by induction of VEGF, resulting in increased angiogenesis activity and vascular permeability. Induces, through 'trans-signaling' and synergistically with IL1B and TNF, the production of VEGF. Involved in metabolic controls, is discharged into the bloodstream after muscle contraction increasing lipolysis and improving insulin resistance. 'Trans-signaling' in central nervous system also regulates energy and glucose homeostasis. Mediates, through GLP-1, crosstalk between insulin-sensitive tissues, intestinal L cells and pancreatic islets to adapt to changes in insulin demand. Also acts as a myokine. Plays a protective role during liver injury, being required for maintenance of tissue regeneration. Also has a pivotal role in iron metabolism by regulating HAMP/hepcidin expression upon inflammation or bacterial infection. Through activation of IL6ST-YAP-NOTCH pathway, induces inflammation-induced epithelial regeneration. This chain is Interleukin-6 (IL6), found in Macaca thibetana (Pere David's macaque).